Reading from the N-terminus, the 390-residue chain is Succinate--CoA ligase [ADP-forming] subunit beta (390 aa).

In terms of domain architecture, ATP-grasp spans 9-244 (KSLFQQYGIP…ISQEDVREAK (236 aa)). ATP is bound by residues K46, E99, L102, and E107. Residues N199 and D213 each coordinate Mg(2+). Residues N264 and 321-323 (GIV) each bind substrate.

This sequence belongs to the succinate/malate CoA ligase beta subunit family. As to quaternary structure, heterotetramer of two alpha and two beta subunits. Requires Mg(2+) as cofactor.

It carries out the reaction succinate + ATP + CoA = succinyl-CoA + ADP + phosphate. It catalyses the reaction GTP + succinate + CoA = succinyl-CoA + GDP + phosphate. Its pathway is carbohydrate metabolism; tricarboxylic acid cycle; succinate from succinyl-CoA (ligase route): step 1/1. Succinyl-CoA synthetase functions in the citric acid cycle (TCA), coupling the hydrolysis of succinyl-CoA to the synthesis of either ATP or GTP and thus represents the only step of substrate-level phosphorylation in the TCA. The beta subunit provides nucleotide specificity of the enzyme and binds the substrate succinate, while the binding sites for coenzyme A and phosphate are found in the alpha subunit. The polypeptide is Succinate--CoA ligase [ADP-forming] subunit beta (Hydrogenovibrio crunogenus (strain DSM 25203 / XCL-2) (Thiomicrospira crunogena)).